The following is a 508-amino-acid chain: Fc receptor-like protein 2 (508 aa).

The N-terminal stretch at 1–19 is a signal peptide; that stretch reads MLLWSLLVIFDAVTEQADS. Ig-like C2-type domains are found at residues 20–98, 109–187, 201–290, and 300–387; these read LTLV…SNIV, PVLT…HRIR, PISN…KVVN, and PVLT…VSIS. Topologically, residues 20-401 are extracellular; that stretch reads LTLVAPSSVF…YRRDLMTAGV (382 aa). C128 and C177 are joined by a disulfide. N-linked (GlcNAc...) asparagine glycosylation is found at N204, N234, N343, N355, and N365. Disulfide bonds link C226-C275 and C321-C368. A helical membrane pass occupies residues 402–422; that stretch reads LWGLFGVLGFTGVALLLYALF. Residues 423–508 lie on the Cytoplasmic side of the membrane; sequence HKISGESSAT…QVIYSSVKKS (86 aa). The tract at residues 429–453 is disordered; that stretch reads SSATNEPRGASRPNPQEFTYSSPTP. Polar residues predominate over residues 441-452; the sequence is PNPQEFTYSSPT. Short sequence motifs (ITIM motif) lie at residues 446–451, 460–465, 472–477, and 500–505; these read FTYSSP, PVYVNV, VVYSQV, and VIYSSV.

The tyrosine-phosphorylated isoform 2 interacts with PTPN6. Post-translationally, isoform 2 is N- and O-glycosylated, and phosphorylated. Expressed in the secondary lymphoid organs, spleen and lymph node. Expression is limited to the mature B-cell lines. Highly expressed in CD19 and within the mantle zones of the tonsil tissue. Isoform 2 is expressed in the spleen, peripheral blood and bone marrow. Isoform 2 and isoform 4 are expressed in B-cell lines. Preferentially expressed in memory B-cells (at protein level).

The protein resides in the cell membrane. In terms of biological role, may have an regulatory role in normal and neoplastic B cell development. The sequence is that of Fc receptor-like protein 2 (FCRL2) from Homo sapiens (Human).